The chain runs to 236 residues: Small ribosomal subunit protein uS2c (236 aa).

The protein belongs to the universal ribosomal protein uS2 family.

Its subcellular location is the plastid. This chain is Small ribosomal subunit protein uS2c (rps2), found in Cuscuta exaltata (Tall dodder).